Reading from the N-terminus, the 317-residue chain is Coproporphyrinogen-III oxidase, aerobic 1 (317 aa).

The interval Val-38 to Gln-47 is important for dimerization. Ser-82 provides a ligand contact to substrate. The active-site Proton donor is the His-96. Residues Asn-98 to Arg-100 and Asn-269 to Ser-274 contribute to the substrate site. Positions Tyr-251–Glu-286 are important for dimerization.

It belongs to the aerobic coproporphyrinogen-III oxidase family. In terms of assembly, homodimer.

The protein localises to the cytoplasm. It carries out the reaction coproporphyrinogen III + O2 + 2 H(+) = protoporphyrinogen IX + 2 CO2 + 2 H2O. Its pathway is porphyrin-containing compound metabolism; protoporphyrin-IX biosynthesis; protoporphyrinogen-IX from coproporphyrinogen-III (O2 route): step 1/1. Key enzyme in heme biosynthesis. Catalyzes the oxidative decarboxylation of propionic acid side chains of rings A and B of coproporphyrinogen III. The sequence is that of Coproporphyrinogen-III oxidase, aerobic 1 from Nostoc sp. (strain PCC 7120 / SAG 25.82 / UTEX 2576).